The sequence spans 87 residues: Cell division topological specificity factor (87 aa).

Belongs to the MinE family.

Prevents the cell division inhibition by proteins MinC and MinD at internal division sites while permitting inhibition at polar sites. This ensures cell division at the proper site by restricting the formation of a division septum at the midpoint of the long axis of the cell. The sequence is that of Cell division topological specificity factor from Roseiflexus castenholzii (strain DSM 13941 / HLO8).